The chain runs to 798 residues: Penicillin-binding protein 1A (798 aa).

Over Met1–Cys9 the chain is Cytoplasmic. The helical; Signal-anchor for type II membrane protein transmembrane segment at Met10 to Val30 threads the bilayer. The Periplasmic segment spans residues Thr31–Phe798. Residues Leu50 to Glu218 form a transglycosylase region. The active-site Proton donor; for transglycosylase activity is the Glu88. Residues Thr413–Glu699 are transpeptidase. Residue Ser460 is the Acyl-ester intermediate; for transpeptidase activity of the active site. The disordered stretch occupies residues Thr734 to Phe798. Residues Leu782–Phe798 are compositionally biased toward polar residues.

It in the N-terminal section; belongs to the glycosyltransferase 51 family. In the C-terminal section; belongs to the transpeptidase family.

The protein localises to the cell inner membrane. It catalyses the reaction [GlcNAc-(1-&gt;4)-Mur2Ac(oyl-L-Ala-gamma-D-Glu-L-Lys-D-Ala-D-Ala)](n)-di-trans,octa-cis-undecaprenyl diphosphate + beta-D-GlcNAc-(1-&gt;4)-Mur2Ac(oyl-L-Ala-gamma-D-Glu-L-Lys-D-Ala-D-Ala)-di-trans,octa-cis-undecaprenyl diphosphate = [GlcNAc-(1-&gt;4)-Mur2Ac(oyl-L-Ala-gamma-D-Glu-L-Lys-D-Ala-D-Ala)](n+1)-di-trans,octa-cis-undecaprenyl diphosphate + di-trans,octa-cis-undecaprenyl diphosphate + H(+). It carries out the reaction Preferential cleavage: (Ac)2-L-Lys-D-Ala-|-D-Ala. Also transpeptidation of peptidyl-alanyl moieties that are N-acyl substituents of D-alanine.. The protein operates within cell wall biogenesis; peptidoglycan biosynthesis. Its function is as follows. Cell wall formation. Synthesis of cross-linked peptidoglycan from the lipid intermediates. The enzyme has a penicillin-insensitive transglycosylase N-terminal domain (formation of linear glycan strands) and a penicillin-sensitive transpeptidase C-terminal domain (cross-linking of the peptide subunits). The protein is Penicillin-binding protein 1A (mrcA) of Neisseria flavescens.